Reading from the N-terminus, the 100-residue chain is Small ribosomal subunit protein uS14c (100 aa).

This sequence belongs to the universal ribosomal protein uS14 family. Part of the 30S ribosomal subunit.

The protein resides in the plastid. The protein localises to the chloroplast. Binds 16S rRNA, required for the assembly of 30S particles. The protein is Small ribosomal subunit protein uS14c of Gracilaria tenuistipitata var. liui (Red alga).